The chain runs to 154 residues: Transcriptional repressor NrdR (154 aa).

The segment at 3–34 (CPFCGANDTKVIDSRLVAEGEQVRRRRECVAC) is a zinc-finger region. In terms of domain architecture, ATP-cone spans 49 to 139 (PRLIKQDGTR…VYRRFQDLDE (91 aa)).

Belongs to the NrdR family. Zn(2+) serves as cofactor.

In terms of biological role, negatively regulates transcription of bacterial ribonucleotide reductase nrd genes and operons by binding to NrdR-boxes. The sequence is that of Transcriptional repressor NrdR from Pseudomonas putida (strain GB-1).